A 31-amino-acid chain; its full sequence is Cytochrome b6-f complex subunit 6 (31 aa).

Residues 4–24 (ITSYFGFLLAALTITSVLFIG) traverse the membrane as a helical segment.

Belongs to the PetL family. In terms of assembly, the 4 large subunits of the cytochrome b6-f complex are cytochrome b6, subunit IV (17 kDa polypeptide, PetD), cytochrome f and the Rieske protein, while the 4 small subunits are PetG, PetL, PetM and PetN. The complex functions as a dimer.

It is found in the plastid. The protein resides in the chloroplast thylakoid membrane. Component of the cytochrome b6-f complex, which mediates electron transfer between photosystem II (PSII) and photosystem I (PSI), cyclic electron flow around PSI, and state transitions. PetL is important for photoautotrophic growth as well as for electron transfer efficiency and stability of the cytochrome b6-f complex. The sequence is that of Cytochrome b6-f complex subunit 6 from Lepidium virginicum (Virginia pepperweed).